Reading from the N-terminus, the 121-residue chain is Large ribosomal subunit protein bL12 (121 aa).

The protein belongs to the bacterial ribosomal protein bL12 family. Homodimer. Part of the ribosomal stalk of the 50S ribosomal subunit. Forms a multimeric L10(L12)X complex, where L10 forms an elongated spine to which 2 to 4 L12 dimers bind in a sequential fashion. Binds GTP-bound translation factors.

In terms of biological role, forms part of the ribosomal stalk which helps the ribosome interact with GTP-bound translation factors. Is thus essential for accurate translation. The polypeptide is Large ribosomal subunit protein bL12 (Pseudomonas fluorescens (strain ATCC BAA-477 / NRRL B-23932 / Pf-5)).